The chain runs to 695 residues: G-patch and R3H domain-containing protein C30B4.02c (695 aa).

Disordered stretches follow at residues 168–200, 213–242, 257–317, 332–351, 388–448, and 475–517; these read SDKEISSTEESEQLCYKEQESEKELYSKDNDDS, DIANNNAAPPPPLAQAQEQLSTENEDEFDI, FADL…FDEG, GNTDSLAEDEDDILEEDEDE, DSED…VAAR, and DKSK…DSDN. Basic and acidic residues predominate over residues 182–198; sequence CYKEQESEKELYSKDND. Composition is skewed to acidic residues over residues 262-286, 307-317, and 337-351; these read VLEEDDDDEDEDEELEGEKEEEEEE, EDSESLEFDEG, and LAEDEDDILEEDEDE. The span at 421 to 434 shows a compositional bias: basic residues; it reads KKDRKLPKKMRKAQ. The R3H domain occupies 525 to 587; that stretch reads KIFINDVYQR…KRYTMLSKTH (63 aa). The region spanning 652-695 is the G-patch domain; the sequence is KENPGRRLLEKLGWYAGKGLGHPENEGSKDSLRAIVKVSRSGLG.

The protein resides in the cytoplasm. This Schizosaccharomyces pombe (strain 972 / ATCC 24843) (Fission yeast) protein is G-patch and R3H domain-containing protein C30B4.02c.